Consider the following 247-residue polypeptide: uncharacterized protein (247 aa).

2 helical membrane-spanning segments follow: residues 11–31 (LIAP…IYCV) and 39–59 (FIAI…TGLL).

Its subcellular location is the cell membrane. This is an uncharacterized protein from Haemophilus influenzae (strain ATCC 51907 / DSM 11121 / KW20 / Rd).